We begin with the raw amino-acid sequence, 622 residues long: Phosphomethylpyrimidine synthase (622 aa).

Substrate-binding positions include Asn-226, Met-255, Tyr-284, His-320, Ser-340–Gly-342, Asp-381–Arg-384, and Glu-420. Position 424 (His-424) interacts with Zn(2+). Residue Tyr-447 coordinates substrate. His-488 contacts Zn(2+). [4Fe-4S] cluster is bound by residues Cys-568, Cys-571, and Cys-576.

Belongs to the ThiC family. As to quaternary structure, homodimer. The cofactor is [4Fe-4S] cluster.

The catalysed reaction is 5-amino-1-(5-phospho-beta-D-ribosyl)imidazole + S-adenosyl-L-methionine = 4-amino-2-methyl-5-(phosphooxymethyl)pyrimidine + CO + 5'-deoxyadenosine + formate + L-methionine + 3 H(+). It participates in cofactor biosynthesis; thiamine diphosphate biosynthesis. Catalyzes the synthesis of the hydroxymethylpyrimidine phosphate (HMP-P) moiety of thiamine from aminoimidazole ribotide (AIR) in a radical S-adenosyl-L-methionine (SAM)-dependent reaction. This Ruthia magnifica subsp. Calyptogena magnifica protein is Phosphomethylpyrimidine synthase.